A 95-amino-acid chain; its full sequence is Histone-like DNA-binding protein (95 aa).

The protein belongs to the bacterial histone-like protein family.

The chain is Histone-like DNA-binding protein from Rickettsia montanensis.